Here is a 426-residue protein sequence, read N- to C-terminus: Gamma-glutamylputrescine oxidoreductase (426 aa).

The protein belongs to the gamma-glutamylputrescine oxidoreductase family.

It carries out the reaction gamma-L-glutamylputrescine + O2 + H2O = 4-(gamma-L-glutamylamino)butanal + H2O2 + NH4(+). The protein operates within amine and polyamine degradation; putrescine degradation; 4-aminobutanoate from putrescine: step 2/4. Involved in the breakdown of putrescine via the oxidation of L-glutamylputrescine. The protein is Gamma-glutamylputrescine oxidoreductase (puuB) of Escherichia coli (strain K12).